We begin with the raw amino-acid sequence, 175 residues long: ADP-ribosylation factor 6 (175 aa).

Gly-2 carries the N-myristoyl glycine lipid modification. Residue Lys-3 is the site of N6-myristoyl lysine attachment. GTP-binding positions include 23-28 (AAGKTT), 41-44 (TIPT), 63-67 (DVGGQ), 122-125 (NKQD), and 155-156 (CA).

It belongs to the small GTPase superfamily. Arf family.

The protein localises to the cytoplasm. The protein resides in the cytosol. Its subcellular location is the cell membrane. It is found in the endosome membrane. It localises to the recycling endosome membrane. The protein localises to the cell projection. The protein resides in the filopodium membrane. Its subcellular location is the ruffle. It is found in the cleavage furrow. It localises to the midbody. The protein localises to the midbody ring. The protein resides in the golgi apparatus. The catalysed reaction is GTP + H2O = GDP + phosphate + H(+). Functionally, GTP-binding protein involved in protein trafficking; regulates endocytic recycling and cytoskeleton remodeling. May modulate vesicle budding and uncoating within the Golgi apparatus. May contribute to the regulation of dendritic branching, filopodia extension and dendritic spine development. The chain is ADP-ribosylation factor 6 (arf6) from Xenopus laevis (African clawed frog).